Here is a 346-residue protein sequence, read N- to C-terminus: 4-hydroxy-2-oxovalerate aldolase (346 aa).

The region spanning 8-260 is the Pyruvate carboxyltransferase domain; sequence VTVHDMTLRD…ETGVDVFKIQ (253 aa). A substrate-binding site is contributed by 16-17; that stretch reads RD. Asp-17 contacts Mn(2+). His-20 acts as the Proton acceptor in catalysis. Substrate is bound by residues Ser-170 and His-199. Mn(2+) contacts are provided by His-199 and His-201. Tyr-290 provides a ligand contact to substrate.

The protein belongs to the 4-hydroxy-2-oxovalerate aldolase family.

It catalyses the reaction (S)-4-hydroxy-2-oxopentanoate = acetaldehyde + pyruvate. The chain is 4-hydroxy-2-oxovalerate aldolase from Polaromonas naphthalenivorans (strain CJ2).